A 194-amino-acid chain; its full sequence is Factor in the germline alpha (194 aa).

Positions Glu-59–Leu-111 constitute a bHLH domain. Residues Ser-121–Asp-137 show a composition bias toward basic and acidic residues. Positions Ser-121–Glu-163 are disordered. Residues His-139–Ala-157 are compositionally biased toward polar residues.

In terms of assembly, heterodimer with TCF3/isoform E12. In terms of tissue distribution, expressed only in the oocytes within the ovary and at lower level in the testis. Found in the resting oocytes of the primordial follicle cells, at the periphery of the ovary and in the hilar region. Also detected in growing oocytes, but at lower levels.

Its subcellular location is the nucleus. Its function is as follows. Germ-line specific transcription factor implicated in postnatal oocyte-specific gene expression. Plays a key regulatory role in the expression of multiple oocyte-specific genes, including those that initiate folliculogenesis and those that encode the zona pellucida (ZP1, ZP2 and ZP3) required for fertilization and early embryonic survival. Essential for oocytes to survive and form primordial follicles. The persistence of FIGLA in adult females suggests that it may regulate additional pathways that are essential for normal ovarian development. Binds to the E-box (5'-CANNTG-3') of the ZPs (ZP1, ZP2, ZP3) promoters. In Mus musculus (Mouse), this protein is Factor in the germline alpha (Figla).